The following is a 203-amino-acid chain: 3-isopropylmalate dehydratase small subunit (203 aa).

Belongs to the LeuD family. LeuD type 1 subfamily. As to quaternary structure, heterodimer of LeuC and LeuD.

It carries out the reaction (2R,3S)-3-isopropylmalate = (2S)-2-isopropylmalate. It participates in amino-acid biosynthesis; L-leucine biosynthesis; L-leucine from 3-methyl-2-oxobutanoate: step 2/4. Functionally, catalyzes the isomerization between 2-isopropylmalate and 3-isopropylmalate, via the formation of 2-isopropylmaleate. This Pelagibacter ubique (strain HTCC1062) protein is 3-isopropylmalate dehydratase small subunit.